A 163-amino-acid chain; its full sequence is NADH-quinone oxidoreductase subunit J (163 aa).

Transmembrane regions (helical) follow at residues 1–21 (MEFV…LVII), 30–50 (LYLI…GAFF), 54–74 (LEVV…IMML), 94–114 (IGPS…IFFV), and 138–158 (LLLV…VFHI).

This sequence belongs to the complex I subunit 6 family. As to quaternary structure, composed of 13 different subunits. Subunits NuoA, H, J, K, L, M, N constitute the membrane sector of the complex.

It localises to the cell membrane. The enzyme catalyses a quinone + NADH + 5 H(+)(in) = a quinol + NAD(+) + 4 H(+)(out). Functionally, NDH-1 shuttles electrons from NADH, via FMN and iron-sulfur (Fe-S) centers, to quinones in the respiratory chain. Couples the redox reaction to proton translocation (for every two electrons transferred, four hydrogen ions are translocated across the cytoplasmic membrane), and thus conserves the redox energy in a proton gradient. The sequence is that of NADH-quinone oxidoreductase subunit J (nuoJ) from Buchnera aphidicola subsp. Schizaphis graminum (strain Sg).